The primary structure comprises 487 residues: N-succinylglutamate 5-semialdehyde dehydrogenase (487 aa).

221 to 226 (GSSDTG) serves as a coordination point for NAD(+). Active-site residues include glutamate 244 and cysteine 278.

The protein belongs to the aldehyde dehydrogenase family. AstD subfamily.

The catalysed reaction is N-succinyl-L-glutamate 5-semialdehyde + NAD(+) + H2O = N-succinyl-L-glutamate + NADH + 2 H(+). The protein operates within amino-acid degradation; L-arginine degradation via AST pathway; L-glutamate and succinate from L-arginine: step 4/5. In terms of biological role, catalyzes the NAD-dependent reduction of succinylglutamate semialdehyde into succinylglutamate. This chain is N-succinylglutamate 5-semialdehyde dehydrogenase, found in Burkholderia cenocepacia (strain HI2424).